Reading from the N-terminus, the 354-residue chain is Glycine betaine/proline betaine transport system permease protein ProW (354 aa).

The tract at residues 1 to 41 (MADQNNPWDTTPAADSAAQSADAWGTPTTAPTDGGGADWLT) is disordered. At 1–99 (MADQNNPWDT…VDYILNGFQQ (99 aa)) the chain is on the cytoplasmic side. Residues 13 to 32 (AADSAAQSADAWGTPTTAPT) show a composition bias toward low complexity. Residues 100–120 (LLLGMPAPVAIIVFALIAWQI) traverse the membrane as a helical segment. S121 is a topological domain (periplasmic). The chain crosses the membrane as a helical span at residues 122-142 (GVGMGVATLVSLIAIGAIGAW). Over 143-148 (SQAMVT) the chain is Cytoplasmic. One can recognise an ABC transmembrane type-1 domain in the interval 145 to 324 (AMVTLALVLT…ILAIILDRLT (180 aa)). The helical transmembrane segment at 149–169 (LALVLTALLFCIVIGLPLGIW) threads the bilayer. Residues 170-198 (LARSPRAAKIIRPLLDAMQTTPAFVYLVP) lie on the Periplasmic side of the membrane. A helical transmembrane segment spans residues 199–219 (IVMLFGIGNVPGVVVTIIFAL). The Cytoplasmic segment spans residues 220-270 (PPIIRLTILGINQVPADLIEASRSFGASPRQMLFKVQLPLAMPTIMAGVNQ). Residues 271–291 (TLMLALSMVVIASMIAVGGLG) form a helical membrane-spanning segment. Over 292-300 (QMVLRGIGR) the chain is Periplasmic. The helical transmembrane segment at 301–321 (LDMGLATVGGVGIVILAIILD) threads the bilayer. The Cytoplasmic portion of the chain corresponds to 322–354 (RLTQAVGRDSRSRGNRRWYTTGPVGLLTRPFIK).

This sequence belongs to the binding-protein-dependent transport system permease family. CysTW subfamily. As to quaternary structure, the complex is composed of two ATP-binding proteins (ProV), two transmembrane proteins (ProW) and a solute-binding protein (ProX).

It localises to the cell inner membrane. In terms of biological role, part of the ProU ABC transporter complex involved in glycine betaine and proline betaine uptake. Probably responsible for the translocation of the substrate across the membrane. The chain is Glycine betaine/proline betaine transport system permease protein ProW from Escherichia coli (strain K12).